The primary structure comprises 326 residues: Phenylserine dehydratase (326 aa).

In terms of assembly, monomer. Requires pyridoxal 5'-phosphate as cofactor.

It carries out the reaction L-threo-3-phenylserine = 3-phenylpyruvate + NH4(+). With respect to regulation, inhibited by phenylhydrazine, hydroxylamine, p-chloromercuribenzoate, and HgCl(2). The chain is Phenylserine dehydratase from Ralstonia pickettii (Burkholderia pickettii).